A 147-amino-acid chain; its full sequence is TRAF-interacting protein with FHA domain-containing protein B (147 aa).

The region spanning 36–108 (LLVGRGQDTH…LHSVNRISFS (73 aa)) is the FHA domain.

In terms of assembly, interacts with TIFA.

Functionally, inhibits TIFA-mediated TRAF6 activation possibly by inducing a conformational change in TIFA. The sequence is that of TRAF-interacting protein with FHA domain-containing protein B from Rattus norvegicus (Rat).